We begin with the raw amino-acid sequence, 147 residues long: Small ribosomal subunit protein uS12 (147 aa).

It belongs to the universal ribosomal protein uS12 family. As to quaternary structure, part of the 30S ribosomal subunit.

With S4 and S5 plays an important role in translational accuracy. Located at the interface of the 30S and 50S subunits. In Methanococcus vannielii (strain ATCC 35089 / DSM 1224 / JCM 13029 / OCM 148 / SB), this protein is Small ribosomal subunit protein uS12.